The chain runs to 324 residues: Lactonase drp35 (324 aa).

Glutamate 47, serine 109, glycine 111, aspartate 129, threonine 132, tyrosine 134, aspartate 137, asparagine 184, aspartate 235, and serine 236 together coordinate Ca(2+). Residue aspartate 235 is the Proton donor of the active site.

It belongs to the SMP-30/CGR1 family. Requires Ca(2+) as cofactor.

It localises to the cytoplasm. In terms of biological role, exhibits lactonase activity. Acts in cells with perturbed membrane integrity and is possibly related to the membrane homeostasis. This Staphylococcus saprophyticus subsp. saprophyticus (strain ATCC 15305 / DSM 20229 / NCIMB 8711 / NCTC 7292 / S-41) protein is Lactonase drp35 (drp35).